The following is a 117-amino-acid chain: Cuticle protein CP1246 (117 aa).

4 repeat units span residues 1 to 17, 26 to 43, 67 to 84, and 93 to 110.

In terms of tissue distribution, calcified shell.

The chain is Cuticle protein CP1246 from Cancer pagurus (Rock crab).